A 299-amino-acid polypeptide reads, in one-letter code: Formylglycine-generating enzyme (299 aa).

Residues cysteine 263 and cysteine 268 each contribute to the Cu cation site.

This sequence belongs to the sulfatase-modifying factor family. Cu cation serves as cofactor.

It carries out the reaction L-cysteinyl-[sulfatase] + 2 a thiol + O2 = an organic disulfide + 3-oxo-L-alanyl-[sulfatase] + hydrogen sulfide + H2O + H(+). It participates in protein modification; sulfatase oxidation. Functionally, oxidase that catalyzes the conversion of cysteine to 3-oxoalanine on target proteins. 3-oxoalanine modification, which is also named formylglycine (fGly), occurs in the maturation of arylsulfatases and some alkaline phosphatases that use the hydrated form of 3-oxoalanine as a catalytic nucleophile. The sequence is that of Formylglycine-generating enzyme from Mycobacterium tuberculosis (strain ATCC 25618 / H37Rv).